A 98-amino-acid chain; its full sequence is Integration host factor subunit alpha (98 aa).

The tract at residues 49–70 is disordered; sequence FGNFDLRDKNQRPGRNPKTGED.

The protein belongs to the bacterial histone-like protein family. Heterodimer of an alpha and a beta chain.

Its function is as follows. This protein is one of the two subunits of integration host factor, a specific DNA-binding protein that functions in genetic recombination as well as in transcriptional and translational control. This chain is Integration host factor subunit alpha, found in Shewanella baltica (strain OS223).